A 538-amino-acid polypeptide reads, in one-letter code: Potassium channel subfamily K member 10 (538 aa).

Topologically, residues 1-71 (MFFLYTDFFL…GLQTVMKWKT (71 aa)) are cytoplasmic. Residues 72–92 (VVAIFVVVVVYLVTGGLVFRA) form a helical membrane-spanning segment. N-linked (GlcNAc...) asparagine glycosylation is found at N144, N147, and N148. The segment at residues 154–180 (LGSAFFFAGTVITTIGYGNIAPSTEGG) is an intramembrane region (pore-forming). Residues T167, I168, G169, and Y170 each coordinate K(+). The tract at residues 167–172 (TIGYGN) is selectivity filter 1. The helical transmembrane segment at 182-202 (IFCILYAIFGIPLFGFLLAGI) threads the bilayer. Residues 203 to 233 (GDQLGTIFGKSIARVEKVFRKKQVSQTKIRV) lie on the Cytoplasmic side of the membrane. A helical transmembrane segment spans residues 234-254 (ISTILFILAGCIVFVTIPAVI). Residues 263–294 (ALESIYFVVVTLTTVGFGDFVAGGNAGINYRE) constitute an intramembrane region (pore-forming). Positions 276, 277, 278, and 279 each coordinate K(+). Residues 276–281 (TVGFGD) are selectivity filter 2. A helical transmembrane segment spans residues 299 to 319 (LVWFWILVGLAYFAAVLSMIG). Over 320–538 (DWLRVLSKKT…ENNSLLEDRN (219 aa)) the chain is Cytoplasmic. Positions 412 to 421 (SQESINNRPN) are enriched in polar residues. 2 disordered regions span residues 412–443 (SQES…EDNI) and 510–538 (QHAE…EDRN). Basic and acidic residues predominate over residues 522–538 (DTKDREPENNSLLEDRN).

Belongs to the two pore domain potassium channel (TC 1.A.1.8) family. Homodimer; disulfide-linked. Forms heterodimers with other 2-pore domain K(+) channel subunits, such as KCNK2, KCNK4 and KCNK18. Abundantly expressed in pancreas and kidney and to a lower level in brain, testis, colon, and small intestine. In brain, mainly expressed in cerebellum, occipital lobe, putamen, and thalamus. No expression is detected in amygdala and spinal cord. In terms of tissue distribution, strongly expressed in kidney (primarily in the proximal tubule) and pancreas. As to expression, abundantly expressed in brain.

Its subcellular location is the cell membrane. It catalyses the reaction K(+)(in) = K(+)(out). The catalysed reaction is Rb(+)(in) = Rb(+)(out). The enzyme catalyses Cs(+)(in) = Cs(+)(out). With respect to regulation, activated by various stimuli including acidic pH, anesthetics chloroform, halothane and isoflurane, mechanical stretch, lipids such as arachidonic, docosahexaenoic and linoleic polyunsaturated fatty acids and lysophosphatidylcholine and lysophosphatidylinositol lysophospholipids. Inhibited by norfluoxetine, the active metabolite of antidepressant fluoxetine (Prozac). Its function is as follows. K(+) channel that conducts voltage-dependent outward rectifying currents upon membrane depolarization. Voltage sensing is coupled to K(+) electrochemical gradient in an 'ion flux gating' mode where outward but not inward ion flow opens the gate. Converts to voltage-independent 'leak' conductance mode upon stimulation by various stimuli including mechanical membrane stretch, acidic pH, heat and lipids. Homo- and heterodimerizes to form functional channels with distinct regulatory and gating properties. In trigeminal ganglia sensory neurons, the heterodimer of KCNK10/TREK-2 and KCNK18/TRESK inhibits neuronal firing and neurogenic inflammation by stabilizing the resting membrane potential at K(+) equilibrium potential as well as by regulating the threshold of action potentials and the spike frequency. Permeable to other monovalent ions such as Rb(+) and Cs(+). This is Potassium channel subfamily K member 10 from Homo sapiens (Human).